We begin with the raw amino-acid sequence, 353 residues long: GTPase Obg (353 aa).

Positions 1-159 (MKFLDEAKVY…RWIWLRLKLI (159 aa)) constitute an Obg domain. Residues 160 to 327 (ADAGLVGLPN…ALRALAAVIG (168 aa)) form the OBG-type G domain. Residues 166-173 (GLPNAGKS), 191-195 (FTTLH), 212-215 (DIPG), 279-282 (NKID), and 308-310 (SGI) contribute to the GTP site. Residues Ser-173 and Thr-193 each contribute to the Mg(2+) site. The segment at 332-353 (SDKAKGAADNAANAEPWAPQDA) is disordered.

Belongs to the TRAFAC class OBG-HflX-like GTPase superfamily. OBG GTPase family. Monomer. Mg(2+) serves as cofactor.

The protein resides in the cytoplasm. An essential GTPase which binds GTP, GDP and possibly (p)ppGpp with moderate affinity, with high nucleotide exchange rates and a fairly low GTP hydrolysis rate. Plays a role in control of the cell cycle, stress response, ribosome biogenesis and in those bacteria that undergo differentiation, in morphogenesis control. The sequence is that of GTPase Obg from Rhodopseudomonas palustris (strain HaA2).